A 155-amino-acid polypeptide reads, in one-letter code: uncharacterized protein (155 aa).

Disordered stretches follow at residues 1–22 (MSSQKGNVTRSRPQKHQNTFTF) and 110–155 (NKEP…DTQA). Ser2 carries the N-acetylserine modification. Ser136, Ser144, and Ser146 each carry phosphoserine. A compositionally biased stretch (acidic residues) spans 136-155 (SDEDLDAESDSDGEDGDTQA).

This is an uncharacterized protein from Mus musculus (Mouse).